The following is a 665-amino-acid chain: FAD-dependent oxidoreductase domain-containing protein 2 (665 aa).

The signal sequence occupies residues 1–17; that stretch reads MGPSGLLVALALHLAVC. A glycan (N-linked (GlcNAc...) asparagine) is linked at N136. The segment at 642–665 is disordered; it reads RWLGDHSTAPEPLTQSLDSNKEEL. The Prevents secretion from ER motif lies at 662–665; it reads KEEL.

Belongs to the FOXRED2 family. Interacts with SEL1L. May interact with OS9 and DNAJC10. Interacts with TXNDC16. FAD is required as a cofactor. Post-translationally, N-glycosylated.

It localises to the endoplasmic reticulum lumen. Its function is as follows. Probable flavoprotein which may function in endoplasmic reticulum associated degradation (ERAD). May bind non-native proteins in the endoplasmic reticulum and target them to the ubiquitination machinery for subsequent degradation. This chain is FAD-dependent oxidoreductase domain-containing protein 2, found in Mus musculus (Mouse).